We begin with the raw amino-acid sequence, 273 residues long: MASTVEFASSFIEGAPPGELADVVSDIKTLTSDGDDIIPSLAPAFERYNESQLATVKLPGASQEVIVSEFNRLEGSRYFDVESQTSFEVDHITQSTSAAQSYVLESQNADLIKSLLKTLGAHAREHYPSSSYGVYPIEKDSAIAILLVANRYSPNNFWNGRYRSIYQFPVGDSTTITGKIHVDVHYYEDGNVALNTTKPLNISVPNASAESIISRIASAERNYQEELNKAFGQMAEGAFKSLRRQLPITRQKVEWEKVGGYRLGQDISGGKGR.

This sequence belongs to the F-actin-capping protein alpha subunit family. Heterodimer of an alpha and a beta subunit.

It localises to the cytoplasm. It is found in the cytoskeleton. Functionally, F-actin-capping proteins bind in a Ca(2+)-independent manner to the fast growing ends of actin filaments (barbed end) thereby blocking the exchange of subunits at these ends. Unlike other capping proteins (such as gelsolin and severin), these proteins do not sever actin filaments. The chain is F-actin-capping protein subunit alpha (cap1) from Emericella nidulans (strain FGSC A4 / ATCC 38163 / CBS 112.46 / NRRL 194 / M139) (Aspergillus nidulans).